Consider the following 88-residue polypeptide: Small cysteine-rich outer membrane protein OmcA (88 aa).

The N-terminal stretch at 1–18 (MKKTALLAALCSVVSLSS) is a signal peptide. Residue Cys-19 is the site of N-palmitoyl cysteine attachment. Cys-19 is lipidated: S-diacylglycerol cysteine.

In terms of assembly, part of a disulfide cross-linked outer membrane complex (COMC) composed of the major outer membrane porin (MOMP), the small cysteine-rich protein (OmcA) and the large cysteine-rich periplasmic protein (OmcB).

The protein localises to the cell outer membrane. Functionally, in elementary bodies (EBs, the infectious stage, which is able to survive outside the host cell) provides the structural integrity of the outer envelope through disulfide cross-links with the large cysteine-rich periplasmic protein and the major outer membrane porin. It has been described in publications as the Sarkosyl-insoluble COMC (Chlamydia outer membrane complex), and serves as the functional equivalent of peptidoglycan. The sequence is that of Small cysteine-rich outer membrane protein OmcA (omcA) from Chlamydia trachomatis serovar B (strain Jali20/OT).